Consider the following 719-residue polypeptide: Transcription factor E4F1 (719 aa).

Residues 20 to 63 (NIITIQTTLGDEDEDIHKCGKCLAEFSALDAFIQHKLSRSCKRT) are required for ubiquitin ligase activity. The tract at residues 59–125 (SCKRTQDPQT…SEDESSSPSK (67 aa)) is disordered. Residues 98-109 (EKQDAKVASGDK) are compositionally biased toward basic and acidic residues. Residues 128–207 (WKLNTEGRYV…GLAFRESGAL (80 aa)) form a mediates dimerization and DNA-binding region. C2H2-type zinc fingers lie at residues 136–158 (YVCD…MFTH) and 164–186 (FVCE…KRRH). The C2H2-type 3; degenerate zinc finger occupies 192–216 (YRCNQCGLAFRESGALTRHLKSLTP). 5 C2H2-type zinc fingers span residues 365–387 (YKCP…VKGH), 393–415 (FKCL…METH), 421–443 (YKCG…MRAH), 449–471 (YHCS…HRTH), and 477–499 (YVCQ…IRHH). The C2H2-type 9; degenerate zinc-finger motif lies at 505–527 (FKCSKCGRGFAEHGTLNRHLRAK).

The protein localises to the nucleus. It localises to the nucleoplasm. Its subcellular location is the cytoplasm. It carries out the reaction S-ubiquitinyl-[E2 ubiquitin-conjugating enzyme]-L-cysteine + [acceptor protein]-L-lysine = [E2 ubiquitin-conjugating enzyme]-L-cysteine + N(6)-ubiquitinyl-[acceptor protein]-L-lysine.. Its pathway is protein modification; protein ubiquitination. Functionally, may function as a transcriptional repressor. May also function as a ubiquitin ligase. Functions in cell survival and proliferation through control of the cell cycle. The sequence is that of Transcription factor E4F1 (e4f1) from Danio rerio (Zebrafish).